Here is a 160-residue protein sequence, read N- to C-terminus: MNNFSHWNEAGRPKMVDISEKEITTRTAIARSTITLSNEVYQAIQQGGIKKGDPTQVAQIAGIMGAKKTADIIPMCHPIMLQGTDLQFDYEKIDNGYALHIQATVKCNGKTGVEMEALTAVSIAALTFYDMCKAVDKTMVIKETYLVEKTGGKSGTFTHK.

Substrate is bound by residues 75–77 (MCH) and 115–116 (ME). Aspartate 130 is an active-site residue.

This sequence belongs to the MoaC family. Homohexamer; trimer of dimers.

The catalysed reaction is (8S)-3',8-cyclo-7,8-dihydroguanosine 5'-triphosphate = cyclic pyranopterin phosphate + diphosphate. Its pathway is cofactor biosynthesis; molybdopterin biosynthesis. In terms of biological role, catalyzes the conversion of (8S)-3',8-cyclo-7,8-dihydroguanosine 5'-triphosphate to cyclic pyranopterin monophosphate (cPMP). The chain is Cyclic pyranopterin monophosphate synthase from Lysinibacillus sphaericus (strain C3-41).